Reading from the N-terminus, the 999-residue chain is Bifunctional glutamine synthetase adenylyltransferase/adenylyl-removing enzyme (999 aa).

The tract at residues 1–483 (MTPGRRSSTF…LHEKLFYRPL (483 aa)) is adenylyl removase. The segment at 489–999 (QLAPGEARLS…RTVVEDLFYA (511 aa)) is adenylyl transferase.

The protein belongs to the GlnE family. The cofactor is Mg(2+).

It carries out the reaction [glutamine synthetase]-O(4)-(5'-adenylyl)-L-tyrosine + phosphate = [glutamine synthetase]-L-tyrosine + ADP. The enzyme catalyses [glutamine synthetase]-L-tyrosine + ATP = [glutamine synthetase]-O(4)-(5'-adenylyl)-L-tyrosine + diphosphate. In terms of biological role, adenylation and deadenylation of glutamate--ammonia ligase. Its function is as follows. Involved in the regulation of glutamine synthetase GlnA, a key enzyme in the process to assimilate ammonia. When cellular nitrogen levels are high, the C-terminal adenylyl transferase (AT) inactivates GlnA by covalent transfer of an adenylyl group from ATP to specific tyrosine residue of GlnA, thus reducing its activity. Conversely, when nitrogen levels are low, the N-terminal adenylyl removase (AR) activates GlnA by removing the adenylyl group by phosphorolysis, increasing its activity. The regulatory region of GlnE binds the signal transduction protein PII (GlnB) which indicates the nitrogen status of the cell. The chain is Bifunctional glutamine synthetase adenylyltransferase/adenylyl-removing enzyme from Streptomyces coelicolor (strain ATCC BAA-471 / A3(2) / M145).